Reading from the N-terminus, the 248-residue chain is Triosephosphate isomerase (248 aa).

Residue 9-11 participates in substrate binding; sequence NWK. The Electrophile role is filled by His94. The Proton acceptor role is filled by Glu166. Residues Gly172, Ser212, and 233 to 234 each bind substrate; that span reads GG.

This sequence belongs to the triosephosphate isomerase family. In terms of assembly, homodimer.

It is found in the cytoplasm. The enzyme catalyses D-glyceraldehyde 3-phosphate = dihydroxyacetone phosphate. The protein operates within carbohydrate biosynthesis; gluconeogenesis. Its pathway is carbohydrate degradation; glycolysis; D-glyceraldehyde 3-phosphate from glycerone phosphate: step 1/1. Its function is as follows. Involved in the gluconeogenesis. Catalyzes stereospecifically the conversion of dihydroxyacetone phosphate (DHAP) to D-glyceraldehyde-3-phosphate (G3P). The polypeptide is Triosephosphate isomerase (Clostridium botulinum (strain Okra / Type B1)).